The chain runs to 222 residues: UPF0502 protein XCC4136 (222 aa).

It belongs to the UPF0502 family.

The protein is UPF0502 protein XCC4136 of Xanthomonas campestris pv. campestris (strain ATCC 33913 / DSM 3586 / NCPPB 528 / LMG 568 / P 25).